We begin with the raw amino-acid sequence, 912 residues long: Non-lysosomal glucosylceramidase (912 aa).

The tract at residues 886 to 912 (HKKNSSRPAVTQGTAPSQPECGPKRSL) is disordered. Positions 891 to 902 (SRPAVTQGTAPS) are enriched in polar residues.

It belongs to the non-lysosomal glucosylceramidase family.

It localises to the endoplasmic reticulum membrane. It is found in the golgi apparatus membrane. The catalysed reaction is a beta-D-glucosyl-(1&lt;-&gt;1')-N-acylsphing-4-enine + H2O = an N-acylsphing-4-enine + D-glucose. The enzyme catalyses a beta-D-galactosyl-(1&lt;-&gt;1')-N-acylsphing-4-enine + H2O = an N-acylsphing-4-enine + D-galactose. It carries out the reaction beta-D-glucosyl-(1-&gt;3)-O-lithocholate + H2O = lithocholate + D-glucose. It catalyses the reaction beta-D-glucosyl-(1-&gt;3)-O-chenodeoxycholate + H2O = chenodeoxycholate + D-glucose. The catalysed reaction is a di-trans,poly-cis-dolichyl beta-D-glucosyl phosphate + chenodeoxycholate = beta-D-glucosyl-(1-&gt;3)-O-chenodeoxycholate + a di-trans,poly-cis-dolichyl phosphate + H(+). The enzyme catalyses octyl beta-D-glucose + chenodeoxycholate = beta-D-glucosyl-(1-&gt;3)-O-chenodeoxycholate + octan-1-ol. It carries out the reaction cholesteryl 3-beta-D-glucoside + H2O = cholesterol + D-glucose. It catalyses the reaction a beta-D-glucosyl-(1&lt;-&gt;1')-N-acylsphing-4-enine + cholesterol = cholesteryl 3-beta-D-glucoside + an N-acylsphing-4-enine. The catalysed reaction is beta-D-glucosyl-N-(9Z-octadecenoyl)-sphing-4E-enine + cholesterol = N-(9Z-octadecenoyl)-sphing-4-enine + cholesteryl 3-beta-D-glucoside. The enzyme catalyses a beta-D-galactosyl-(1&lt;-&gt;1')-N-acylsphing-4-enine + cholesterol = cholesteryl 3-beta-D-galactoside + an N-acylsphing-4-enine. It carries out the reaction 1-(beta-D-galactosyl)-N-dodecanoylsphing-4-enine + cholesterol = cholesteryl 3-beta-D-galactoside + N-dodecanoylsphing-4-enine. It functions in the pathway lipid metabolism; sphingolipid metabolism. The protein operates within steroid metabolism; cholesterol metabolism. With respect to regulation, enzymatic activity is dependent on membrane association and requires the presence of lipids. In terms of biological role, non-lysosomal glucosylceramidase that catalyzes the hydrolysis of glucosylceramides/GlcCers (such as beta-D-glucosyl-(1&lt;-&gt;1')-N-acylsphing-4-enine) to free glucose and ceramides (such as N-acylsphing-4-enine). GlcCers are membrane glycosphingolipids that have a wide intracellular distribution. They are the main precursors of more complex glycosphingolipids that play a role in cellular growth, differentiation, adhesion, signaling, cytoskeletal dynamics and membrane properties. Involved in the transglucosylation of cholesterol, transfers glucose from GlcCer to cholesterol, thereby modifying its water solubility and biological properties. Under specific conditions, may catalyze the reverse reaction, transferring glucose from cholesteryl-3-beta-D-glucoside to ceramide (such as N-acylsphing-4-enine). May play a role in the metabolism of bile acids. Able to hydrolyze bile acid 3-O-glucosides as well as to produce bile acid-glucose conjugates thanks to a bile acid glucosyl transferase activity. Catalyzes the hydrolysis of galactosylceramides/GalCers (such as beta-D-galactosyl-(1&lt;-&gt;1')-N-acylsphing-4-enine), as well as the galactosyl transfer between GalCers and cholesterol in vitro with lower activity compared with their activity against GlcCers. This chain is Non-lysosomal glucosylceramidase, found in Rattus norvegicus (Rat).